Reading from the N-terminus, the 456-residue chain is Adenylosuccinate lyase (456 aa).

N(6)-(1,2-dicarboxyethyl)-AMP is bound by residues 15-16 (RY), 90-92 (NHD), and 122-123 (TS). The Proton donor/acceptor role is filled by His-171. Gln-247 provides a ligand contact to N(6)-(1,2-dicarboxyethyl)-AMP. Ser-295 (proton donor/acceptor) is an active-site residue. Residues Ser-296, 301 to 303 (KVN), Asn-309, Arg-335, and 340 to 344 (STVLR) each bind N(6)-(1,2-dicarboxyethyl)-AMP.

The protein belongs to the lyase 1 family. Adenylosuccinate lyase subfamily. Homotetramer. Residues from neighboring subunits contribute catalytic and substrate-binding residues to each active site.

The catalysed reaction is N(6)-(1,2-dicarboxyethyl)-AMP = fumarate + AMP. The enzyme catalyses (2S)-2-[5-amino-1-(5-phospho-beta-D-ribosyl)imidazole-4-carboxamido]succinate = 5-amino-1-(5-phospho-beta-D-ribosyl)imidazole-4-carboxamide + fumarate. It functions in the pathway purine metabolism; AMP biosynthesis via de novo pathway; AMP from IMP: step 2/2. It participates in purine metabolism; IMP biosynthesis via de novo pathway; 5-amino-1-(5-phospho-D-ribosyl)imidazole-4-carboxamide from 5-amino-1-(5-phospho-D-ribosyl)imidazole-4-carboxylate: step 2/2. Its function is as follows. Catalyzes two reactions in de novo purine nucleotide biosynthesis. Catalyzes the breakdown of 5-aminoimidazole- (N-succinylocarboxamide) ribotide (SAICAR or 2-[5-amino-1-(5-phospho-beta-D-ribosyl)imidazole-4-carboxamido]succinate) to 5-aminoimidazole-4-carboxamide ribotide (AICAR or 5-amino-1-(5-phospho-beta-D-ribosyl)imidazole-4-carboxamide) and fumarate, and of adenylosuccinate (ADS or N(6)-(1,2-dicarboxyethyl)-AMP) to adenosine monophosphate (AMP) and fumarate. This Legionella pneumophila subsp. pneumophila (strain Philadelphia 1 / ATCC 33152 / DSM 7513) protein is Adenylosuccinate lyase (purB).